Here is a 500-residue protein sequence, read N- to C-terminus: Cholesterol 24-hydroxylase (500 aa).

The chain crosses the membrane as a helical span at residues 3–23 (PGLLLLGSAVLLAFGLCCTFV). Cys-437 contributes to the heme binding site.

This sequence belongs to the cytochrome P450 family. The cofactor is heme. Expressed in brain. The mRNA was broadly distributed with higher levels in gray matter zones and lower levels in regions rich in white matter. Not detected in fetal sample but its expression increases linearly with age.

The protein resides in the endoplasmic reticulum membrane. It localises to the microsome membrane. It is found in the postsynapse. The protein localises to the presynapse. Its subcellular location is the cell projection. The protein resides in the dendrite. The enzyme catalyses cholesterol + reduced [NADPH--hemoprotein reductase] + O2 = (24S)-hydroxycholesterol + oxidized [NADPH--hemoprotein reductase] + H2O + H(+). It carries out the reaction cholestanol + reduced [NADPH--hemoprotein reductase] + O2 = (24S)-hydroxycholestanol + oxidized [NADPH--hemoprotein reductase] + H2O + H(+). It catalyses the reaction 7-dehydrocholesterol + reduced [NADPH--hemoprotein reductase] + O2 = cholesta-5,7-dien-3beta,24S-diol + oxidized [NADPH--hemoprotein reductase] + H2O + H(+). The catalysed reaction is 7-dehydrocholesterol + reduced [NADPH--hemoprotein reductase] + O2 = cholesta-5,7-dien-3beta,25-diol + oxidized [NADPH--hemoprotein reductase] + H2O + H(+). The enzyme catalyses desmosterol + reduced [NADPH--hemoprotein reductase] + O2 = (24Z),26-hydroxydesmosterol + oxidized [NADPH--hemoprotein reductase] + H2O + H(+). It carries out the reaction desmosterol + reduced [NADPH--hemoprotein reductase] + O2 = (24S)-25-epoxycholesterol + oxidized [NADPH--hemoprotein reductase] + H2O + H(+). It catalyses the reaction 4beta-hydroxycholesterol + reduced [NADPH--hemoprotein reductase] + O2 = 4beta,24S-dihydroxycholesterol + oxidized [NADPH--hemoprotein reductase] + H2O + H(+). The catalysed reaction is (24S)-hydroxycholesterol + reduced [NADPH--hemoprotein reductase] + O2 = (24S,25R)-24,26-dihydroxycholesterol + oxidized [NADPH--hemoprotein reductase] + H2O + H(+). The enzyme catalyses (24S)-hydroxycholesterol + reduced [NADPH--hemoprotein reductase] + O2 = 24S,25-dihydroxycholesterol + oxidized [NADPH--hemoprotein reductase] + H2O + H(+). It carries out the reaction 7alpha-hydroxycholesterol + reduced [NADPH--hemoprotein reductase] + O2 = (24S)-7alpha-dihydroxycholesterol + oxidized [NADPH--hemoprotein reductase] + H2O + H(+). It catalyses the reaction progesterone + reduced [NADPH--hemoprotein reductase] + O2 = 17alpha-hydroxyprogesterone + oxidized [NADPH--hemoprotein reductase] + H2O + H(+). The catalysed reaction is testosterone + reduced [NADPH--hemoprotein reductase] + O2 = 16beta,17beta-dihydroxyandrost-4-en-3-one + oxidized [NADPH--hemoprotein reductase] + H2O + H(+). The enzyme catalyses testosterone + reduced [NADPH--hemoprotein reductase] + O2 = 2-hydroxytestosterone + oxidized [NADPH--hemoprotein reductase] + H2O + H(+). It carries out the reaction testosterone + reduced [NADPH--hemoprotein reductase] + O2 = 6beta,17beta-dihydroxyandrost-4-en-3-one + oxidized [NADPH--hemoprotein reductase] + H2O + H(+). Its pathway is steroid metabolism; cholesterol degradation. It participates in lipid metabolism; C21-steroid hormone metabolism. Functionally, P450 monooxygenase that plays a major role in cholesterol homeostasis in the brain. Primarily catalyzes the hydroxylation (with S stereochemistry) at C-24 of cholesterol side chain, triggering cholesterol diffusion out of neurons and its further degradation. By promoting constant cholesterol elimination in neurons, may activate the mevalonate pathway and coordinate the synthesis of new cholesterol and nonsterol isoprenoids involved in synaptic activity and learning. Further hydroxylates cholesterol derivatives and hormone steroids on both the ring and side chain of these molecules, converting them into active oxysterols involved in lipid signaling and biosynthesis. Acts as an epoxidase converting cholesta-5,24-dien-3beta-ol/desmosterol into (24S),25-epoxycholesterol, an abundant lipid ligand of nuclear NR1H2 and NR1H3 receptors shown to promote neurogenesis in developing brain. May also catalyze the oxidative metabolism of xenobiotics, such as clotrimazole. This Homo sapiens (Human) protein is Cholesterol 24-hydroxylase.